The following is a 424-amino-acid chain: Enolase (424 aa).

Q162 provides a ligand contact to (2R)-2-phosphoglycerate. The Proton donor role is filled by E204. Mg(2+) is bound by residues D241, E284, and D311. (2R)-2-phosphoglycerate is bound by residues K336, R365, S366, and K387. K336 acts as the Proton acceptor in catalysis.

This sequence belongs to the enolase family. The cofactor is Mg(2+).

It is found in the cytoplasm. The protein localises to the secreted. The protein resides in the cell surface. It catalyses the reaction (2R)-2-phosphoglycerate = phosphoenolpyruvate + H2O. Its pathway is carbohydrate degradation; glycolysis; pyruvate from D-glyceraldehyde 3-phosphate: step 4/5. Catalyzes the reversible conversion of 2-phosphoglycerate (2-PG) into phosphoenolpyruvate (PEP). It is essential for the degradation of carbohydrates via glycolysis. The sequence is that of Enolase from Rhizobium etli (strain ATCC 51251 / DSM 11541 / JCM 21823 / NBRC 15573 / CFN 42).